The sequence spans 96 residues: Putative regulatory protein DET0036 (96 aa).

This sequence belongs to the RemA family.

This chain is Putative regulatory protein DET0036, found in Dehalococcoides mccartyi (strain ATCC BAA-2266 / KCTC 15142 / 195) (Dehalococcoides ethenogenes (strain 195)).